Reading from the N-terminus, the 436-residue chain is Methylenetetrahydrofolate--tRNA-(uracil-5-)-methyltransferase TrmFO (436 aa).

Gly10–Gly15 serves as a coordination point for FAD.

It belongs to the MnmG family. TrmFO subfamily. It depends on FAD as a cofactor.

The protein resides in the cytoplasm. The catalysed reaction is uridine(54) in tRNA + (6R)-5,10-methylene-5,6,7,8-tetrahydrofolate + NADH + H(+) = 5-methyluridine(54) in tRNA + (6S)-5,6,7,8-tetrahydrofolate + NAD(+). It catalyses the reaction uridine(54) in tRNA + (6R)-5,10-methylene-5,6,7,8-tetrahydrofolate + NADPH + H(+) = 5-methyluridine(54) in tRNA + (6S)-5,6,7,8-tetrahydrofolate + NADP(+). Its function is as follows. Catalyzes the folate-dependent formation of 5-methyl-uridine at position 54 (M-5-U54) in all tRNAs. This Exiguobacterium sp. (strain ATCC BAA-1283 / AT1b) protein is Methylenetetrahydrofolate--tRNA-(uracil-5-)-methyltransferase TrmFO.